Here is a 184-residue protein sequence, read N- to C-terminus: MKNVTDSFVFLGHWPSAGSFGFNTDILATNPINLSVVLGVLIFFGKGVLSDLLDNRKQRILNTIRNSEELRDGAIEQLEKARARLRKVEMEAEQFRVNGYSEIEREKWNLINSTSKTLEQLENYKNETIQFEQQRAINQVRQRVFQQALQGAIGTLNSCLSNELHLRTINANIGMFGAMKEITD.

Residues 27 to 49 (LATNPINLSVVLGVLIFFGKGVL) traverse the membrane as a helical segment.

Belongs to the ATPase B chain family. As to quaternary structure, F-type ATPases have 2 components, F(1) - the catalytic core - and F(0) - the membrane proton channel. F(1) has five subunits: alpha(3), beta(3), gamma(1), delta(1), epsilon(1). F(0) has four main subunits: a(1), b(1), b'(1) and c(10-14). The alpha and beta chains form an alternating ring which encloses part of the gamma chain. F(1) is attached to F(0) by a central stalk formed by the gamma and epsilon chains, while a peripheral stalk is formed by the delta, b and b' chains.

Its subcellular location is the plastid. The protein localises to the chloroplast thylakoid membrane. F(1)F(0) ATP synthase produces ATP from ADP in the presence of a proton or sodium gradient. F-type ATPases consist of two structural domains, F(1) containing the extramembraneous catalytic core and F(0) containing the membrane proton channel, linked together by a central stalk and a peripheral stalk. During catalysis, ATP synthesis in the catalytic domain of F(1) is coupled via a rotary mechanism of the central stalk subunits to proton translocation. Its function is as follows. Component of the F(0) channel, it forms part of the peripheral stalk, linking F(1) to F(0). This Carica papaya (Papaya) protein is ATP synthase subunit b, chloroplastic.